The chain runs to 205 residues: Protein PAXX (205 aa).

The PISA domain occupies 39–81 (FNLYVTDAAELWSTCFSPDSLARLKARFGLSGAEDIHSRFRAA). Threonine 147 is subject to Phosphothreonine. Polar residues predominate over residues 147–159 (TITSPKKNTQPAG). The interval 147–205 (TITSPKKNTQPAGTQFLPELDHQRGSSGPGVRRRCPGESLINPGFKSKKPAAGVDFDET) is disordered. Residue serine 150 is modified to Phosphoserine. Positions 172 to 205 (SSGPGVRRRCPGESLINPGFKSKKPAAGVDFDET) are mediates interaction with XRCC5/Ku80 and XRCC6/Ku70 and association with the non-homologous end joining core complex. Positions 191–205 (FKSKKPAAGVDFDET) match the XLM motif.

Belongs to the XRCC4-XLF family. PAXX subfamily. As to quaternary structure, homodimer. Interacts with the DNA-bound XRCC5/Ku80 and XRCC6/Ku70 heterodimer (Ku complex); the interaction is direct. Associated component of the non-homologous end joining (NHEJ) complex, composed of the core proteins PRKDC, LIG4, XRCC4, XRCC6/Ku70, XRCC5/Ku86 and NHEJ1/XLF. Interacts with POLL (DNA polymerase lambda); promoting POLL recruitment to double-strand breaks (DSBs) and stimulation of the end-filling activity of POLL. In terms of processing, phosphorylation may inhibit interaction with the DNA-bound XRCC5/Ku80 and XRCC6/Ku70 heterodimer (Ku complex).

It is found in the nucleus. It localises to the chromosome. Functionally, non-essential DNA repair protein involved in DNA non-homologous end joining (NHEJ); participates in double-strand break (DSB) repair and V(D)J recombination. May act as a scaffold required for accumulation of the Ku heterodimer, composed of XRCC5/Ku80 and XRCC6/Ku70, at double-strand break sites and promote the assembly and/or stability of the NHEJ machinery. Involved in NHEJ by promoting the ligation of blunt-ended DNA ends. Together with NHEJ1/XLF, collaborates with DNA polymerase lambda (POLL) to promote joining of non-cohesive DNA ends. Constitutes a non-essential component of classical NHEJ: has a complementary but distinct function with NHEJ1/XLF in DNA repair. The sequence is that of Protein PAXX from Mus musculus (Mouse).